Here is a 365-residue protein sequence, read N- to C-terminus: MAASTMSVCSSDLSYGSRVCLPGSCDSCSDSWQVDDCPESCCEPPCCAPAPCLSLVCTPVSRVSSPCCPVTCEPSPCQSGCTSSCTPSCCQQSSCQLACCASSPCQQACCVPVCCKTVCCKPVCCVSVCCGDSSCCQQSSCQSACCTSSPCQQACCVPVCCKPVCSGISSSCCQQSSCVSCVSSPCCQAVCEPSPCQSGCTSSCTPSCCQQSSCQPTCCTSSPCQQACCVPVCCVPVCCVPTCSEDSSSCCQQSSCQPACCTSSPCQHACCVPVCSGASTSCCQQSSCQPACCTASCCRSSSSVSLLCHPVCKSTCCVPVPSCGASASSCQPSCCRTASCVSLLCRPMCSRPACYSLCSGQKSSC.

29 consecutive repeat copies span residues 41 to 45 (CCEPP), 46 to 50 (CCAPA), 67 to 71 (CCPVT), 89 to 93 (CCQQS), 99 to 103 (CCASS), 109 to 113 (CCVPV), 114 to 118 (CCKTV), 119 to 123 (CCKPV), 124 to 128 (CCVSV), 129 to 133 (CCGDS), 135 to 139 (CCQQS), 145 to 149 (CCTSS), 155 to 159 (CCVPV), 160 to 164 (CCKPV), 172 to 176 (CCQQS), 186 to 190 (CCQAV), 208 to 212 (CCQQS), 218 to 222 (CCTSS), 228 to 232 (CCVPV), 233 to 237 (CCVPV), 238 to 242 (CCVPT), 250 to 254 (CCQQS), 260 to 264 (CCTSS), 270 to 274 (CCVPV), 282 to 286 (CCQQS), 292 to 296 (CCTAS), 297 to 301 (CCRSS), 316 to 320 (CCVPV), and 334 to 338 (CCRTA). Positions 41 to 338 (CCEPPCCAPA…SCQPSCCRTA (298 aa)) are 29 X 5 AA repeats of C-C-X(3).

The protein belongs to the KRTAP type 10 family. Interacts with hair keratins. In terms of tissue distribution, restricted to a narrow region of the hair fiber cuticle, lying approximately 20 cell layers above the apex of the dermal papilla of the hair root; not detected in any other tissues.

In terms of biological role, in the hair cortex, hair keratin intermediate filaments are embedded in an interfilamentous matrix, consisting of hair keratin-associated proteins (KRTAP), which are essential for the formation of a rigid and resistant hair shaft through their extensive disulfide bond cross-linking with abundant cysteine residues of hair keratins. The matrix proteins include the high-sulfur and high-glycine-tyrosine keratins. The chain is Keratin-associated protein 10-6 (KRTAP10-6) from Homo sapiens (Human).